Here is a 262-residue protein sequence, read N- to C-terminus: Dimeric xanthone biosynthesis cluster protein R11 (262 aa).

Residues 69 to 160 (IADLLFYTKT…PQLFKHLNDE (92 aa)) form a hemerythrin-like region.

Its pathway is secondary metabolite biosynthesis. Functionally, part of the gene cluster that mediates the biosynthesis of the dimeric xanthones cryptosporioptides. The pathway begins with the synthesis of atrochrysone thioester by the polyketide synthase dmx-nrPKS. The atrochrysone carboxyl ACP thioesterase dmxR1 then breaks the thioester bond and releases the atrochrysone carboxylic acid from dmx-nrPKS. Atrochrysone carboxylic acid is decarboxylated by the decarboxylase dmxR15, and oxidized by the anthrone oxygenase dmxR16 to yield emodin. Emodin is then reduced to emodin hydroquinone by the oxidoreductase dmxR7. A-ring reduction by the short chain dehydrogenase dmxR18, dehydration by the scytalone dehydratase-like protein dmxR17 and probable spontaneous re-oxidation, results in overall deoxygenation to chrysophanol. Baeyer-Villiger oxidation by the Baeyer-Villiger monooxygenase (BVMO) dmxR6 then yields monodictylactone in equilibrium with monodictyphenone. In the case of the cryptosporioptides biosynthesis, monodictylactone is reduced at C-12 to an alcohol (by the short chain dehydrogenases dmxR12 or dmxR8) and hydroxylated at C-5 by dmxR9, yielding the electron-rich aromatic which could eliminate H(2)O to form the ortho-quinonemethide, followed by tautomerisation to paraquinone and complete the formal reduction to produce the 10-methylgroup. Conjugate addition of C-4a-OH to the resulting paraquinone by the monooxygenase dmxR10 then gives cyclohexadienone, which is then reduced at C-5 by the short chain dehydrogenase dmxR3 to give the dihydroxanthone. The 6,7-epoxide in the cryptosporioptides could be introduced by the cytochrome P450 monooxygenase dmxL3. The highly reducing PKS dmxL2 manufactures butyrate, which is further carboxylated by dmxL1 to form ethylmalonate. It is not yet clear whether the carboxylation occurs while the butyrate is attached to the ACP of dmxL2, but this unusual fungal metabolite could then be esterified to O-5 by the O-acetyltransferase dmxR13. Finally, dimerization performed by dmxR5 gives the observed dimers cryptosporioptides A, B and C as the final products of the pathway. This Cryptosporiopsis sp. (strain 8999) protein is Dimeric xanthone biosynthesis cluster protein R11.